We begin with the raw amino-acid sequence, 286 residues long: Protein N-terminal amidase (286 aa).

Positions 1-286 (MKFGCVQFFP…NGIVVGELEK (286 aa)) constitute a CN hydrolase domain. Glu-43 acts as the Proton acceptor in catalysis. Lys-121 (proton donor) is an active-site residue. Cys-155 acts as the Nucleophile in catalysis.

Belongs to the carbon-nitrogen hydrolase superfamily.

It localises to the cytoplasm. It is found in the nucleus. Its function is as follows. Deamidates N-terminal Asn and Gln. Component of a targeting complex in the N-end rule pathway. The sequence is that of Protein N-terminal amidase (nta1) from Schizosaccharomyces pombe (strain 972 / ATCC 24843) (Fission yeast).